The primary structure comprises 159 residues: Major allergen Pyr c 1 (159 aa).

The protein belongs to the BetVI family.

The sequence is that of Major allergen Pyr c 1 (PYRC1) from Pyrus communis (Pear).